Here is a 149-residue protein sequence, read N- to C-terminus: Flagellar assembly factor FliW (149 aa).

This sequence belongs to the FliW family. Interacts with translational regulator CsrA and flagellin(s).

It is found in the cytoplasm. Acts as an anti-CsrA protein, binds CsrA and prevents it from repressing translation of its target genes, one of which is flagellin. Binds to flagellin and participates in the assembly of the flagellum. The protein is Flagellar assembly factor FliW of Thermotoga sp. (strain RQ2).